A 151-amino-acid polypeptide reads, in one-letter code: MSSAPTPHVAWFRLFQRGQIYMKTWPNEKRLAPVFPENRVTRATRFAIRFMPPIAMFTLCWQIALGGQLGPAIATALFACSLPMQGLWWLGKRAVTPLPPTLLQWFHQLRDKLQASGIALAPVDGAPTYQSLAELLRRCCKQLDKTFLDDI.

Helical transmembrane passes span 46-65 (FAIRFMPPIAMFTLCWQIAL) and 69-91 (LGPAIATALFACSLPMQGLWWLG).

It belongs to the UPF0208 family.

Its subcellular location is the cell inner membrane. This Edwardsiella ictaluri (strain 93-146) protein is UPF0208 membrane protein NT01EI_2692.